The following is a 292-amino-acid chain: Histamine N-methyltransferase (292 aa).

E28 is a substrate binding site. Positions 60, 89, 94, 120, and 142 each coordinate S-adenosyl-L-methionine. N283 contacts substrate.

This sequence belongs to the class I-like SAM-binding methyltransferase superfamily. HNMT family. As to quaternary structure, monomer.

The protein localises to the cytoplasm. It carries out the reaction histamine + S-adenosyl-L-methionine = N(tau)-methylhistamine + S-adenosyl-L-homocysteine + H(+). Its function is as follows. Inactivates histamine by N-methylation. Plays an important role in degrading histamine and in regulating the airway response to histamine. The polypeptide is Histamine N-methyltransferase (HNMT) (Bos taurus (Bovine)).